The sequence spans 272 residues: Indole-3-glycerol phosphate synthase (272 aa).

Belongs to the TrpC family.

It catalyses the reaction 1-(2-carboxyphenylamino)-1-deoxy-D-ribulose 5-phosphate + H(+) = (1S,2R)-1-C-(indol-3-yl)glycerol 3-phosphate + CO2 + H2O. Its pathway is amino-acid biosynthesis; L-tryptophan biosynthesis; L-tryptophan from chorismate: step 4/5. The protein is Indole-3-glycerol phosphate synthase of Mycolicibacterium paratuberculosis (strain ATCC BAA-968 / K-10) (Mycobacterium paratuberculosis).